Consider the following 210-residue polypeptide: Transcriptional regulator GfcR (210 aa).

Residues 39-60 (VERSGAATEPEPRAEPEGPDDI) form a disordered region. A compositionally biased stretch (basic and acidic residues) spans 48 to 60 (PEPRAEPEGPDDI).

This sequence belongs to the purine/pyrimidine phosphoribosyltransferase family. GfcR subfamily.

With respect to regulation, interaction with effectors modulates GfcR activity. 2-keto-3-deoxy-6-phosphogluconate (KDPG), fructose-1,6-bisphosphate (FBP), 2-keto-3-deoxy-6-phosphogalactonate (KDPGal) and glycerol-3-phosphate (G3P), which are intermediates of sugar and glycerol degradation pathways, can act as inducer molecules. Its function is as follows. DNA-binding transcriptional regulator that functions as a regulator of central sugar catabolic pathways. Is both a local regulator of specific steps in the pathways for D-glucose and D-fructose degradation and a global regulator of hexose catabolism. In the presence of D-glucose, activates expression of the gene encoding the gluconate dehydratase (gad), which is involved in D-glucose catabolism via the semiphosphorylative Entner-Doudoroff (spED) pathway. In the presence of D-fructose, activates expression of the genes encoding the PTS system EIIC component (ptfC) and the fructose-1,6-bisphosphate aldolase (fba), which are involved in D-fructose uptake and degradation via the modified Embden-Meyerhof pathway. In addition, in the presence of D-glucose, D-fructose, D-galactose or glycerol, it activates expression of the genes encoding glyceraldehyde-3-phosphate dehydrogenase (gap) and pyruvate kinase (pykA), enzymes common to all four degradation pathways. Acts by binding directly to the promoter region of the regulated genes. In Haloferax volcanii (strain ATCC 29605 / DSM 3757 / JCM 8879 / NBRC 14742 / NCIMB 2012 / VKM B-1768 / DS2) (Halobacterium volcanii), this protein is Transcriptional regulator GfcR.